Consider the following 852-residue polypeptide: DNA mismatch repair protein MutS (852 aa).

Residue 602 to 609 coordinates ATP; sequence GPNMSGKS.

It belongs to the DNA mismatch repair MutS family.

In terms of biological role, this protein is involved in the repair of mismatches in DNA. It is possible that it carries out the mismatch recognition step. This protein has a weak ATPase activity. This is DNA mismatch repair protein MutS from Streptococcus thermophilus (strain ATCC BAA-491 / LMD-9).